Here is a 361-residue protein sequence, read N- to C-terminus: Phospho-N-acetylmuramoyl-pentapeptide-transferase (361 aa).

10 helical membrane-spanning segments follow: residues 28–48 (LAII…IEFL), 74–94 (TMGG…LADL), 99–119 (IWIT…DDYA), 133–153 (SKLL…EYLD), 168–188 (LSLD…VGSS), 203–223 (VPIA…GNLI), 236–256 (TGEL…FLWF), 263–283 (VFMG…ISVI), 288–308 (IVLA…ILQV), and 338–358 (KVVI…LSSL).

The protein belongs to the glycosyltransferase 4 family. MraY subfamily. Mg(2+) is required as a cofactor.

The protein resides in the cell inner membrane. It carries out the reaction UDP-N-acetyl-alpha-D-muramoyl-L-alanyl-gamma-D-glutamyl-meso-2,6-diaminopimeloyl-D-alanyl-D-alanine + di-trans,octa-cis-undecaprenyl phosphate = di-trans,octa-cis-undecaprenyl diphospho-N-acetyl-alpha-D-muramoyl-L-alanyl-D-glutamyl-meso-2,6-diaminopimeloyl-D-alanyl-D-alanine + UMP. It functions in the pathway cell wall biogenesis; peptidoglycan biosynthesis. Its function is as follows. Catalyzes the initial step of the lipid cycle reactions in the biosynthesis of the cell wall peptidoglycan: transfers peptidoglycan precursor phospho-MurNAc-pentapeptide from UDP-MurNAc-pentapeptide onto the lipid carrier undecaprenyl phosphate, yielding undecaprenyl-pyrophosphoryl-MurNAc-pentapeptide, known as lipid I. The chain is Phospho-N-acetylmuramoyl-pentapeptide-transferase from Rickettsia africae (strain ESF-5).